The sequence spans 590 residues: Glutamine--fructose-6-phosphate aminotransferase [isomerizing] (590 aa).

Cys-2 serves as the catalytic Nucleophile; for GATase activity. The region spanning 2–221 is the Glutamine amidotransferase type-2 domain; that stretch reads CGIIGIVSSK…DGELGFITTS (220 aa). 2 consecutive SIS domains span residues 286–422 and 445–580; these read IIAE…DNTN and IGEE…PDKP. Catalysis depends on Lys-585, which acts as the For Fru-6P isomerization activity.

In terms of assembly, homodimer.

The protein localises to the cytoplasm. The catalysed reaction is D-fructose 6-phosphate + L-glutamine = D-glucosamine 6-phosphate + L-glutamate. Catalyzes the first step in hexosamine metabolism, converting fructose-6P into glucosamine-6P using glutamine as a nitrogen source. In Sulfolobus acidocaldarius (strain ATCC 33909 / DSM 639 / JCM 8929 / NBRC 15157 / NCIMB 11770), this protein is Glutamine--fructose-6-phosphate aminotransferase [isomerizing].